Here is a 320-residue protein sequence, read N- to C-terminus: UDP-N-acetylenolpyruvoylglucosamine reductase (320 aa).

The region spanning 35–216 (RAGGPAQVLF…KQAMDEVQHH (182 aa)) is the FAD-binding PCMH-type domain. Arginine 181 is a catalytic residue. The active-site Proton donor is the serine 230. Glutamate 300 is a catalytic residue.

It belongs to the MurB family. FAD serves as cofactor.

The protein resides in the cytoplasm. It catalyses the reaction UDP-N-acetyl-alpha-D-muramate + NADP(+) = UDP-N-acetyl-3-O-(1-carboxyvinyl)-alpha-D-glucosamine + NADPH + H(+). It participates in cell wall biogenesis; peptidoglycan biosynthesis. Functionally, cell wall formation. The polypeptide is UDP-N-acetylenolpyruvoylglucosamine reductase (Brucella anthropi (strain ATCC 49188 / DSM 6882 / CCUG 24695 / JCM 21032 / LMG 3331 / NBRC 15819 / NCTC 12168 / Alc 37) (Ochrobactrum anthropi)).